Reading from the N-terminus, the 179-residue chain is Inosine/xanthosine triphosphatase (179 aa).

A substrate-binding site is contributed by 8–13 (TTNPAK). The Mg(2+) site is built by Asp-38 and Glu-68. 68-69 (EA) contacts substrate.

This sequence belongs to the YjjX NTPase family. In terms of assembly, homodimer. Requires Mg(2+) as cofactor. Mn(2+) is required as a cofactor.

The catalysed reaction is XTP + H2O = XDP + phosphate + H(+). The enzyme catalyses ITP + H2O = IDP + phosphate + H(+). Phosphatase that hydrolyzes non-canonical purine nucleotides such as XTP and ITP to their respective diphosphate derivatives. Probably excludes non-canonical purines from DNA/RNA precursor pool, thus preventing their incorporation into DNA/RNA and avoiding chromosomal lesions. The polypeptide is Inosine/xanthosine triphosphatase (Pectobacterium carotovorum subsp. carotovorum (strain PC1)).